Reading from the N-terminus, the 570-residue chain is Protein translocase subunit SecD (570 aa).

Polar residues predominate over residues 104–117 (GANATGTPSASETG). Positions 104-198 (GANATGTPSA…SASASGDDAT (95 aa)) are disordered. Residues 122 to 146 (KATDKATDKATDKATDGDKATDGDK) show a composition bias toward basic and acidic residues. 2 stretches are compositionally biased toward low complexity: residues 147–161 (ASGT…SATS) and 172–196 (ADPS…SGDD). Helical transmembrane passes span 370-390 (AGLI…LFYY), 395-415 (FIAV…MALL), 419-439 (IGFA…GITA), 474-494 (ILVS…VTVG), and 498-518 (GFAF…FLFT). Positions 540–570 (LDPKALGAKPPLRRTRRPSRPAAGPVDPKEA) are disordered.

It belongs to the SecD/SecF family. SecD subfamily. As to quaternary structure, forms a complex with SecF. Part of the essential Sec protein translocation apparatus which comprises SecA, SecYEG and auxiliary proteins SecDF. Other proteins may also be involved.

Its subcellular location is the cell membrane. Its function is as follows. Part of the Sec protein translocase complex. Interacts with the SecYEG preprotein conducting channel. SecDF uses the proton motive force (PMF) to complete protein translocation after the ATP-dependent function of SecA. In Streptomyces coelicolor (strain ATCC BAA-471 / A3(2) / M145), this protein is Protein translocase subunit SecD.